Consider the following 332-residue polypeptide: Small ribosomal subunit protein uS2 (332 aa).

Belongs to the universal ribosomal protein uS2 family.

This is Small ribosomal subunit protein uS2 from Nitrobacter hamburgensis (strain DSM 10229 / NCIMB 13809 / X14).